The sequence spans 630 residues: Polypeptide N-acetylgalactosaminyltransferase 5 (630 aa).

The Cytoplasmic portion of the chain corresponds to 1-20; it reads MTFSTFTRKMRGRMRSNTCR. Residues 21-38 form a helical; Signal-anchor for type II membrane protein membrane-spanning segment; it reads IVLLTSLVWVIFDFVLIA. Over 39-630 the chain is Lumenal; the sequence is RYSDCIGKDG…MESKFKWQAH (592 aa). An N-linked (GlcNAc...) asparagine glycan is attached at N166. Intrachain disulfides connect C177–C410, C401–C479, C513–C530, C553–C568, and C594–C611. A catalytic subdomain A region spans residues 186 to 296; it reads LPTTSIVIVF…EGWLEPLLAR (111 aa). Substrate-binding residues include D227 and R257. Mn(2+) is bound by residues D280 and H282. Positions 356-418 are catalytic subdomain B; it reads PLRTPTMAGG…PCSHVGHVFR (63 aa). W387 provides a ligand contact to substrate. H415 is a Mn(2+) binding site. Residues R418 and Y423 each contribute to the substrate site. The Ricin B-type lectin domain occupies 500 to 622; it reads YYLGEIRNAE…YGKGQQWLME (123 aa).

This sequence belongs to the glycosyltransferase 2 family. GalNAc-T subfamily. Requires Mn(2+) as cofactor. Expressed during oogenesis, in the somatically derived follicle cells that surround the developing oocyte, which are involved in the maturation of the oocyte and construction of the egg shell, as well as playing a role in subsequent embryonic pattern formation. During embryonic stages 9-11, expressed in the primordium of the foregut, midgut and hindgut. Expressed in salivary glands from embryonic stage 12 onwards. During embryonic stages 12-13, expressed in the posterior midgut and hindgut. During embryonic stages 14-17, expressed in the hindgut and the posterior spiracles. Expression is also detected in the epidermis and antennomaxillary complex at embryonic stages 16-17. In third instar larvae, ubiquitously expressed in wing, eye-antennal, leg and haltere imaginal disks.

It is found in the golgi apparatus membrane. The catalysed reaction is L-seryl-[protein] + UDP-N-acetyl-alpha-D-galactosamine = a 3-O-[N-acetyl-alpha-D-galactosaminyl]-L-seryl-[protein] + UDP + H(+). It catalyses the reaction L-threonyl-[protein] + UDP-N-acetyl-alpha-D-galactosamine = a 3-O-[N-acetyl-alpha-D-galactosaminyl]-L-threonyl-[protein] + UDP + H(+). It participates in protein modification; protein glycosylation. Functionally, catalyzes the initial reaction in O-linked oligosaccharide biosynthesis, the transfer of an N-acetyl-D-galactosamine residue to a serine or threonine residue on the protein receptor. It can both act as a peptide transferase that transfers GalNAc onto unmodified peptide substrates, and as a glycopeptide transferase that requires the prior addition of a GalNAc on a peptide before adding additional GalNAc moieties. Prefers EA2 as substrate. In the larval midgut, required for O-glycosylation of apical and luminal proteins within copper cells enabling proper gut acidification. The sequence is that of Polypeptide N-acetylgalactosaminyltransferase 5 from Drosophila melanogaster (Fruit fly).